The sequence spans 1505 residues: Homeobox protein cut-like 1 (1505 aa).

Residues 56–407 (LLKSFQGEID…ALRISNSDLS (352 aa)) are a coiled coil. Composition is skewed to polar residues over residues 396–407 (NAALRISNSDLS) and 440–451 (EQASNTNGTHQF). Disordered regions lie at residues 396 to 455 (NAAL…SPAG), 512 to 552 (YSTN…EEMD), 646 to 669 (PKRR…GSDE), and 682 to 704 (LQVQ…NSDD). The span at 516 to 546 (SISSQSPLQQSPDVNGMAPSPSQSESAGSVS) shows a compositional bias: low complexity. Glu-540 carries the phosphoserine modification. The CUT 1 DNA-binding region spans 542-629 (AGSVSEGEEM…ILALRSIQGR (88 aa)). A compositionally biased stretch (low complexity) spans 694-703 (SSASGSGNSD). At Ser-763 the chain carries Phosphoserine. A disordered region spans residues 768 to 802 (SAAPEAGASALPNPPALKKEAQDAPGLDPQGAADC). Glycyl lysine isopeptide (Lys-Gly) (interchain with G-Cter in SUMO2) cross-links involve residues Lys-785, Lys-811, and Lys-842. Over residues 815–853 (GRSGAWKDHWWSAVQPERRNAASSEEAKAEETGGGKEKG) the composition is skewed to basic and acidic residues. Residues 815-930 (GRSGAWKDHW…KPTKPSVPPL (116 aa)) form a disordered region. Polar residues-rich tracts occupy residues 868 to 877 (SQLQGPSSSE) and 887 to 911 (SPYS…NSPL). The residue at position 909 (Ser-909) is a Phosphoserine. The CUT 2 DNA-binding region spans 934-1021 (QYEVYMYQEV…QGVLPVQGQQ (88 aa)). Positions 1036-1049 (LQQGCVSSESTPKT) are enriched in polar residues. A disordered region spans residues 1036-1110 (LQQGCVSSES…QPTTPLPLSG (75 aa)). The span at 1050 to 1066 (SASCSPAPESPMSSSES) shows a compositional bias: low complexity. A phosphoserine mark is found at Ser-1059 and Ser-1069. The CUT 3 DNA-binding region spans 1117–1204 (QELVAMSPEL…VEKLMDMKRM (88 aa)). The segment at 1210–1247 (MKRRHSSVSDSQPCEPPSVGTEYSQGASPQPQHQLKKP) is disordered. The segment covering 1230–1242 (TEYSQGASPQPQH) has biased composition (polar residues). The segment at residues 1244–1303 (LKKPRVVLAPEEKEALKRAYQQKPYPSPKTIEDLATQLNLKTSTVINWFHNYRSRIRREL) is a DNA-binding region (homeobox). At Ser-1270 the chain carries Phosphoserine. A Glycyl lysine isopeptide (Lys-Gly) (interchain with G-Cter in SUMO2) cross-link involves residue Lys-1284. Residues 1312–1480 (SQGQAGASDS…SRDNPLRKKK (169 aa)) are disordered. Residues 1316–1333 (AGASDSPSARSGRAAPSS) show a composition bias toward low complexity. Phosphoserine is present on Ser-1337. Basic and acidic residues-rich tracts occupy residues 1353-1368 (EEPK…EVPR) and 1384-1394 (DDARDDDHEGG). Low complexity-rich tracts occupy residues 1405-1436 (PASA…AAPS) and 1443-1455 (NSSS…RPSS). At Ser-1455 the chain carries Phosphoserine. The span at 1467-1476 (GARDSRDNPL) shows a compositional bias: basic and acidic residues. Ser-1486 and Ser-1496 each carry phosphoserine.

It belongs to the CUT homeobox family. As to quaternary structure, interacts with BANP. Interacts with SATB1 (via DNA-binding domains); the interaction inhibits the attachment of both proteins to DNA. In terms of processing, phosphorylated by PKA. As cells progress into S phase, a fraction of CUX1 molecules is proteolytically processed into N-terminally truncated proteins of 110 kDa by CTSL. Cell cycle-dependent processing of CUX1 serves to generate a CDP/Cux p110 with distinct DNA binding and transcriptional properties.

It is found in the nucleus. Its function is as follows. Transcription factor involved in the control of neuronal differentiation in the brain. Regulates dendrite development and branching, and dendritic spine formation in cortical layers II-III. Also involved in the control of synaptogenesis. In addition, it has probably a broad role in mammalian development as a repressor of developmentally regulated gene expression. May act by preventing binding of positively-activing CCAAT factors to promoters. Component of nf-munr repressor; binds to the matrix attachment regions (MARs) (5' and 3') of the immunoglobulin heavy chain enhancer. Represses T-cell receptor (TCR) beta enhancer function by binding to MARbeta, an ATC-rich DNA sequence located upstream of the TCR beta enhancer. Binds to the TH enhancer; may require the basic helix-loop-helix protein TCF4 as a coactivator. In terms of biological role, plays a role in cell cycle progression, in particular at the G1/S transition. As cells progress into S phase, a fraction of CUX1 molecules is proteolytically processed into N-terminally truncated proteins of 110 kDa. While CUX1 only transiently binds to DNA and carries the CCAAT-displacement activity, CDP/Cux p110 makes a stable interaction with DNA and stimulates expression of genes such as POLA1. The sequence is that of Homeobox protein cut-like 1 from Homo sapiens (Human).